Reading from the N-terminus, the 239-residue chain is Pyridoxine 5'-phosphate synthase (239 aa).

3-amino-2-oxopropyl phosphate is bound at residue asparagine 7. 9 to 10 (DH) serves as a coordination point for 1-deoxy-D-xylulose 5-phosphate. A 3-amino-2-oxopropyl phosphate-binding site is contributed by arginine 18. The Proton acceptor role is filled by histidine 43. The 1-deoxy-D-xylulose 5-phosphate site is built by arginine 45 and histidine 50. The Proton acceptor role is filled by glutamate 70. Threonine 100 provides a ligand contact to 1-deoxy-D-xylulose 5-phosphate. Histidine 191 acts as the Proton donor in catalysis. 3-amino-2-oxopropyl phosphate is bound by residues glycine 192 and 213-214 (GH).

Belongs to the PNP synthase family. In terms of assembly, homooctamer; tetramer of dimers.

It is found in the cytoplasm. The catalysed reaction is 3-amino-2-oxopropyl phosphate + 1-deoxy-D-xylulose 5-phosphate = pyridoxine 5'-phosphate + phosphate + 2 H2O + H(+). The protein operates within cofactor biosynthesis; pyridoxine 5'-phosphate biosynthesis; pyridoxine 5'-phosphate from D-erythrose 4-phosphate: step 5/5. Its function is as follows. Catalyzes the complicated ring closure reaction between the two acyclic compounds 1-deoxy-D-xylulose-5-phosphate (DXP) and 3-amino-2-oxopropyl phosphate (1-amino-acetone-3-phosphate or AAP) to form pyridoxine 5'-phosphate (PNP) and inorganic phosphate. In Trichormus variabilis (strain ATCC 29413 / PCC 7937) (Anabaena variabilis), this protein is Pyridoxine 5'-phosphate synthase.